A 376-amino-acid polypeptide reads, in one-letter code: Enoyl-[acyl-carrier-protein] reductase, mitochondrial (376 aa).

The N-terminal 12 residues, 1 to 12 (MLRTLRTSQLAR), are a transit peptide targeting the mitochondrion. Tyr79 acts as the Proton donor in catalysis. Residues Asn160, 183–186 (NSGV), 206–208 (RDR), 277–280 (YGGM), 302–304 (YWL), and Lys368 each bind NADP(+).

It belongs to the zinc-containing alcohol dehydrogenase family. Quinone oxidoreductase subfamily. Homodimer.

The protein localises to the mitochondrion matrix. The enzyme catalyses a 2,3-saturated acyl-[ACP] + NADP(+) = a (2E)-enoyl-[ACP] + NADPH + H(+). Its function is as follows. Catalyzes the NADPH-dependent reduction of trans-2-enoyl thioesters in mitochondrial fatty acid synthesis (fatty acid synthesis type II). Fatty acid chain elongation in mitochondria uses acyl carrier protein (ACP) as an acyl group carrier, but the enzyme accepts both ACP and CoA thioesters as substrates in vitro. Required for respiration and the maintenance of the mitochondrial compartment. The polypeptide is Enoyl-[acyl-carrier-protein] reductase, mitochondrial (ETR1) (Yarrowia lipolytica (strain CLIB 122 / E 150) (Yeast)).